Reading from the N-terminus, the 660-residue chain is Dual specificity mitogen-activated protein kinase kinase 1 (660 aa).

Residues 1-57 (MNTNTNTNTNISSSGNNIINTPTTNNNNKNNNNNNNNNNNSNNSNNNSSNNNNNNNN) show a composition bias toward low complexity. Disordered stretches follow at residues 1-60 (MNTN…NAVG), 105-169 (KGES…FNNL), and 204-229 (NNNYNNYNNNNNSNNNNNNYNNSNNN). A Glycyl lysine isopeptide (Lys-Gly) (interchain with G-Cter in SUMO) cross-link involves residue Lys105. Polar residues predominate over residues 123–148 (LHSNLNPQLLASPTSSESMDFNQGFY). The span at 149 to 169 (NNNNNNNNNNNNNNLNNFNNL) shows a compositional bias: low complexity. One can recognise a Protein kinase domain in the interval 292-641 (LKIIRVLGRG…ASNLLNHEFV (350 aa)). ATP is bound by residues 298–306 (LGRGAGGVV) and Lys321. Asp414 functions as the Proton acceptor in the catalytic mechanism. Disordered stretches follow at residues 491–510 (SNLPHQQQQPLQQQQQQQQQ) and 539–573 (NNSNNNIRNSNNNNNNNNNNNNNNNNNNNNNVLDI). Composition is skewed to low complexity over residues 496-510 (QQQQPLQQQQQQQQQ) and 539-569 (NNSNNNIRNSNNNNNNNNNNNNNNNNNNNNN).

Belongs to the protein kinase superfamily. STE Ser/Thr protein kinase family. MAP kinase kinase subfamily. As to quaternary structure, interacts with mip1. Mg(2+) is required as a cofactor. Post-translationally, sumoylated and ubiquitinated in response to chemoattractant stimulation. Sumoylation is linked to kinase activation and results in translocation.

Its subcellular location is the cytoplasm. The protein resides in the nucleus. The catalysed reaction is L-seryl-[protein] + ATP = O-phospho-L-seryl-[protein] + ADP + H(+). It catalyses the reaction L-threonyl-[protein] + ATP = O-phospho-L-threonyl-[protein] + ADP + H(+). It carries out the reaction L-tyrosyl-[protein] + ATP = O-phospho-L-tyrosyl-[protein] + ADP + H(+). Functionally, required for cAMP-mediated activation of guanylyl cyclase activity and plays an essential role in aggregation, morphogenesis, and chemotaxis. Appears to act upstream of erk1 but not erk2. The polypeptide is Dual specificity mitogen-activated protein kinase kinase 1 (Dictyostelium discoideum (Social amoeba)).